A 500-amino-acid polypeptide reads, in one-letter code: Glycerol kinase (500 aa).

An ADP-binding site is contributed by Thr-14. Positions 14, 15, and 16 each coordinate ATP. Thr-14 serves as a coordination point for sn-glycerol 3-phosphate. Arg-18 contacts ADP. The sn-glycerol 3-phosphate site is built by Arg-84, Glu-85, and Tyr-136. Glycerol contacts are provided by Arg-84, Glu-85, and Tyr-136. Phosphohistidine; by HPr is present on His-232. Asp-246 contributes to the sn-glycerol 3-phosphate binding site. Asp-246 and Gln-247 together coordinate glycerol. ADP-binding residues include Thr-268 and Gly-311. 4 residues coordinate ATP: Thr-268, Gly-311, Gln-315, and Gly-412. Gly-412 and Asn-416 together coordinate ADP.

It belongs to the FGGY kinase family. As to quaternary structure, homotetramer and homodimer (in equilibrium). The phosphoenolpyruvate-dependent sugar phosphotransferase system (PTS), including enzyme I, and histidine-containing protein (HPr) are required for the phosphorylation, which leads to the activation of the enzyme.

The enzyme catalyses glycerol + ATP = sn-glycerol 3-phosphate + ADP + H(+). The protein operates within polyol metabolism; glycerol degradation via glycerol kinase pathway; sn-glycerol 3-phosphate from glycerol: step 1/1. Its activity is regulated as follows. Activated by phosphorylation and inhibited by fructose 1,6-bisphosphate (FBP). In terms of biological role, key enzyme in the regulation of glycerol uptake and metabolism. Catalyzes the phosphorylation of glycerol to yield sn-glycerol 3-phosphate. The polypeptide is Glycerol kinase (Limosilactobacillus reuteri (strain DSM 20016) (Lactobacillus reuteri)).